The following is a 344-amino-acid chain: RNA 3'-terminal phosphate cyclase (344 aa).

ATP-binding positions include Gln103 and 283-287 (HLADQ). His308 functions as the Tele-AMP-histidine intermediate in the catalytic mechanism.

It belongs to the RNA 3'-terminal cyclase family. Type 1 subfamily.

Its subcellular location is the cytoplasm. The catalysed reaction is a 3'-end 3'-phospho-ribonucleotide-RNA + ATP = a 3'-end 2',3'-cyclophospho-ribonucleotide-RNA + AMP + diphosphate. In terms of biological role, catalyzes the conversion of 3'-phosphate to a 2',3'-cyclic phosphodiester at the end of RNA. The mechanism of action of the enzyme occurs in 3 steps: (A) adenylation of the enzyme by ATP; (B) transfer of adenylate to an RNA-N3'P to produce RNA-N3'PP5'A; (C) and attack of the adjacent 2'-hydroxyl on the 3'-phosphorus in the diester linkage to produce the cyclic end product. The biological role of this enzyme is unknown but it is likely to function in some aspects of cellular RNA processing. The chain is RNA 3'-terminal phosphate cyclase from Salmonella agona (strain SL483).